Here is a 299-residue protein sequence, read N- to C-terminus: Nucleotide-binding protein DIP1313 (299 aa).

22-29 (GLSGAGLS) serves as a coordination point for ATP. Position 73–76 (73–76 (DVRS)) interacts with GTP.

It belongs to the RapZ-like family.

Its function is as follows. Displays ATPase and GTPase activities. This is Nucleotide-binding protein DIP1313 from Corynebacterium diphtheriae (strain ATCC 700971 / NCTC 13129 / Biotype gravis).